The sequence spans 898 residues: Vacuolar protein sorting-associated protein 41 homolog (898 aa).

A compositionally biased stretch (basic and acidic residues) spans 1–10 (MDESNDKENE). The interval 1–35 (MDESNDKENEFGDSFLEDSGDITRTTEDEDEAPLE) is disordered. A CHCR repeat occupies 614 to 756 (LRLLLDNADS…VADFPTHFSQ (143 aa)). The RING-type; atypical zinc finger occupies 835–890 (CSLCSQVIMNTGQDMIPRKFNDIKVFKCGHIFHLTCSASEIDRRQMIEDGICIACS).

It belongs to the VPS41 family. In terms of assembly, probable component of the homotypic fusion and vacuole protein sorting (HOPS) complex consisting of the core class C Vps proteins vps-11, vps-16, vps-18, and which further associates with vps-33.1, vps-39 and vps-41.

It is found in the endosome membrane. The protein resides in the late endosome. Its subcellular location is the lysosome. The protein localises to the golgi apparatus. It localises to the trans-Golgi network. It is found in the early endosome. The protein resides in the cytoplasmic vesicle. Its subcellular location is the clathrin-coated vesicle. Functionally, plays a role in vesicle-mediated protein trafficking to lysosomal compartments including the endocytic membrane transport pathways. Believed to act in part as a core component of the putative HOPS endosomal tethering complex which is proposed to be involved in the rab-5-to-rab-7 endosome conversion probably implicating sand-1, and via binding SNAREs and SNARE complexes to mediate tethering and docking events during SNARE-mediated membrane fusion. The HOPS complex is proposed to be recruited to rab-7 on the late endosomal membrane and to regulate late endocytic, phagocytic and autophagic traffic towards lysosomes. Within the HOPS complex, contributes to the normal development of gut granules in the adult intestine. May mediate the tethering of autophagosomes with lysosomes. Has a role in the negative regulation of apoptosis. Required for uptake of exogenous dsRNA which is used in experimental RNA silencing. The polypeptide is Vacuolar protein sorting-associated protein 41 homolog (Caenorhabditis briggsae).